Consider the following 400-residue polypeptide: F-box/LRR-repeat protein 14 (400 aa).

One can recognise an F-box domain in the interval 2–48 (ETHISCLFPELLAMIFGYLDVRDKGRAAQVCTAWRDAAYHKSVWRGV). The tract at residues 2-48 (ETHISCLFPELLAMIFGYLDVRDKGRAAQVCTAWRDAAYHKSVWRGV) is required for down-regulation of SNAI1. LRR repeat units follow at residues 144-163 (GLEV…GLLL), 170-191 (RLKS…GHLA), 203-225 (GLEQ…HISR), 229-250 (GLRL…LHLS), and 254-275 (SLRS…MHLA).

As to quaternary structure, part of a SCF (SKP1-cullin-F-box) ubiquitin-protein ligase complex. Interacts with SKP1 and CUL1. Interacts with SNAI1; the interaction requires the phosphorylation of the two serine residues in the substrate destruction motif D-S-G-X(2,3,4)-S.

The protein resides in the cytoplasm. Substrate-recognition component of some SCF (SKP1-CUL1-F-box protein)-type E3 ubiquitin-protein ligase complexes. The SCF(FBXL14) complex acts by mediating ubiquitination and subsequent degradation of SNAI1. The protein is F-box/LRR-repeat protein 14 (FBXL14) of Bos taurus (Bovine).